The primary structure comprises 558 residues: uncharacterized protein (558 aa).

The next 6 helical transmembrane spans lie at 63–83 (LTGIVVALLVVTFAFPVPSIY), 90–110 (VTFGVAPAYATLALAIGTYWI), 143–163 (VAAVHLILWDIGGALLATLYG), 168–188 (VFVTIILFSVTICGVLVATNC), 226–246 (SLGSGVPVTGIATTALYVLLV), and 258–278 (VLILSITTLIFGFLVMWILAW). Residues 279 to 330 (LTAAPVRVVRAALKRVEQGDLRGDLVVFDGTELGELQRGFNAMVNGLRERER) form the HAMP domain. The 125-residue stretch at 362-486 (AVVFVDIVGS…KPVNQAARLC (125 aa)) folds into the Guanylate cyclase domain. Residues 529-558 (TQLASPHRRPPGSIHLTAEHAEEIRTDRLG) are disordered. The segment covering 545–558 (TAEHAEEIRTDRLG) has biased composition (basic and acidic residues).

It belongs to the adenylyl cyclase class-3 family.

The protein resides in the cell membrane. This is an uncharacterized protein from Mycobacterium tuberculosis (strain CDC 1551 / Oshkosh).